A 444-amino-acid polypeptide reads, in one-letter code: Elongation factor 1-alpha (444 aa).

The 222-residue stretch at 14-235 folds into the tr-type G domain; that stretch reads KPHLNLAIIG…ALDAIEPPPR (222 aa). Residues 23 to 30 form a G1 region; it reads GHVDHGKS. Residue 23 to 30 coordinates GTP; the sequence is GHVDHGKS. Mg(2+) is bound at residue serine 30. The interval 79–83 is G2; sequence GVTIE. A G3 region spans residues 100–103; that stretch reads DLPG. GTP contacts are provided by residues 100–104 and 162–165; these read DLPGH and NKMD. A G4 region spans residues 162–165; that stretch reads NKMD. The G5 stretch occupies residues 201-203; the sequence is SAV.

Belongs to the TRAFAC class translation factor GTPase superfamily. Classic translation factor GTPase family. EF-Tu/EF-1A subfamily.

It is found in the cytoplasm. The catalysed reaction is GTP + H2O = GDP + phosphate + H(+). Functionally, GTP hydrolase that promotes the GTP-dependent binding of aminoacyl-tRNA to the A-site of ribosomes during protein biosynthesis. The chain is Elongation factor 1-alpha from Caldivirga maquilingensis (strain ATCC 700844 / DSM 13496 / JCM 10307 / IC-167).